The following is a 189-amino-acid chain: Protein GrpE (189 aa).

The disordered stretch occupies residues 1-31 (MSKKHMKGNGGEVPENSEMSGSEELVAVEPG).

The protein belongs to the GrpE family. As to quaternary structure, homodimer.

The protein resides in the cytoplasm. Participates actively in the response to hyperosmotic and heat shock by preventing the aggregation of stress-denatured proteins, in association with DnaK and GrpE. It is the nucleotide exchange factor for DnaK and may function as a thermosensor. Unfolded proteins bind initially to DnaJ; upon interaction with the DnaJ-bound protein, DnaK hydrolyzes its bound ATP, resulting in the formation of a stable complex. GrpE releases ADP from DnaK; ATP binding to DnaK triggers the release of the substrate protein, thus completing the reaction cycle. Several rounds of ATP-dependent interactions between DnaJ, DnaK and GrpE are required for fully efficient folding. This chain is Protein GrpE, found in Syntrophobacter fumaroxidans (strain DSM 10017 / MPOB).